Here is a 461-residue protein sequence, read N- to C-terminus: Cysteine--tRNA ligase (461 aa).

Cysteine 28 provides a ligand contact to Zn(2+). The short motif at 30-40 (ITVYDLCHIGH) is the 'HIGH' region element. Zn(2+)-binding residues include cysteine 209, histidine 234, and glutamate 238. The 'KMSKS' region signature appears at 266–270 (KMSKS). Lysine 269 provides a ligand contact to ATP.

Belongs to the class-I aminoacyl-tRNA synthetase family. Monomer. Zn(2+) is required as a cofactor.

It is found in the cytoplasm. It carries out the reaction tRNA(Cys) + L-cysteine + ATP = L-cysteinyl-tRNA(Cys) + AMP + diphosphate. This Escherichia coli O17:K52:H18 (strain UMN026 / ExPEC) protein is Cysteine--tRNA ligase.